We begin with the raw amino-acid sequence, 56 residues long: Potassium channel toxin alpha-KTx 9.8 (56 aa).

The signal sequence occupies residues 1-19 (MSRLFTLVLIVLAMNVMMA). Positions 20–28 (IISDPVVEA) are excised as a propeptide. 3 disulfide bridges follow: Cys-31-Cys-47, Cys-34-Cys-52, and Cys-38-Cys-54.

The protein belongs to the short scorpion toxin superfamily. Potassium channel inhibitor family. Alpha-KTx 09 subfamily. As to expression, expressed by the venom gland.

The protein resides in the secreted. Functionally, potassium channel inhibitor. The sequence is that of Potassium channel toxin alpha-KTx 9.8 from Buthus israelis (Israeli scorpion).